The primary structure comprises 241 residues: ATP synthase subunit a (241 aa).

Transmembrane regions (helical) follow at residues Asn27–Leu47, Val52–Leu72, Val87–Phe107, His112–Phe132, Ile142–Phe162, Leu175–Lys195, and Leu198–Val218.

The protein belongs to the ATPase A chain family. In terms of assembly, F-type ATPases have 2 components, CF(1) - the catalytic core - and CF(0) - the membrane proton channel. CF(1) has five subunits: alpha(3), beta(3), gamma(1), delta(1), epsilon(1). CF(0) has three main subunits: a(1), b(2) and c(9-12). The alpha and beta chains form an alternating ring which encloses part of the gamma chain. CF(1) is attached to CF(0) by a central stalk formed by the gamma and epsilon chains, while a peripheral stalk is formed by the delta and b chains.

The protein localises to the cell inner membrane. Functionally, key component of the proton channel; it plays a direct role in the translocation of protons across the membrane. The sequence is that of ATP synthase subunit a from Anaplasma marginale (strain St. Maries).